Reading from the N-terminus, the 71-residue chain is Prokaryotic ubiquitin-like protein Pup (71 aa).

The segment covering 1 to 18 has biased composition (basic and acidic residues); that stretch reads MPEKDTGGQHRATRRTEE. A disordered region spans residues 1–36; that stretch reads MPEKDTGGQHRATRRTEEHDETIDEATATSDVQERR. The segment at 27–65 is ARC ATPase binding; the sequence is TATSDVQERREKLDADVDAILDEIDDVLEENAEEFVRSY. A coiled-coil region spans residues 30–59; the sequence is SDVQERREKLDADVDAILDEIDDVLEENAE. Glu-71 is covalently cross-linked (Isoglutamyl lysine isopeptide (Glu-Lys) (interchain with K-? in acceptor proteins)).

This sequence belongs to the prokaryotic ubiquitin-like protein family. Strongly interacts with the proteasome-associated ATPase ARC through a hydrophobic interface; the interacting region of Pup lies in its C-terminal half. There is one Pup binding site per ARC hexamer ring.

It participates in protein degradation; proteasomal Pup-dependent pathway. Protein modifier that is covalently attached to lysine residues of substrate proteins, thereby targeting them for proteasomal degradation. The tagging system is termed pupylation. This Acidothermus cellulolyticus (strain ATCC 43068 / DSM 8971 / 11B) protein is Prokaryotic ubiquitin-like protein Pup.